The following is a 55-amino-acid chain: Probable Rubredoxin-2 (55 aa).

The 51-residue stretch at 4–54 folds into the Rubredoxin-like domain; that stretch reads MARYQCMCGWVYDEDKGEPSQNIPPGTKFEDLPDTFRCPQCGLGKNAFRKI. The Fe cation site is built by Cys9, Cys11, Cys41, and Cys44.

The protein belongs to the rubredoxin family. Requires Fe(3+) as cofactor.

Its function is as follows. Rubredoxin is a small nonheme, iron protein lacking acid-labile sulfide. Its single Fe, chelated to 4 Cys, functions as an electron acceptor and may also stabilize the conformation of the molecule. The polypeptide is Probable Rubredoxin-2 (Methanocaldococcus jannaschii (strain ATCC 43067 / DSM 2661 / JAL-1 / JCM 10045 / NBRC 100440) (Methanococcus jannaschii)).